The following is a 319-amino-acid chain: Malate dehydrogenase (319 aa).

Residues 10-15 (GAGNIG) and D34 contribute to the NAD(+) site. Substrate-binding residues include R83 and R89. NAD(+) contacts are provided by residues N96 and 119 to 121 (ITN). Substrate is bound by residues N121 and R152. H176 acts as the Proton acceptor in catalysis.

It belongs to the LDH/MDH superfamily. MDH type 3 family.

The enzyme catalyses (S)-malate + NAD(+) = oxaloacetate + NADH + H(+). Functionally, catalyzes the reversible oxidation of malate to oxaloacetate. The sequence is that of Malate dehydrogenase from Francisella tularensis subsp. mediasiatica (strain FSC147).